The following is a 546-amino-acid chain: MTPGELRRLYFIIHTFLSYGLDELIPKIRLTLPLRIWRRMLFWMPNRHQDQPLGTRLRLALQELGPVWIKFGQMLSTRRDLFPPHIADQLALLQDRVAPFEGKLAQQQIEKAMGGLPVDAWFDDFSVEPLASASIAQVHTARLKENGKEVVIKVIRPDILPIIKADMKLIYRLARWVPRLLPDGRRLRPQEVVREYEKTLLDELNLLRESANAIQLRRNFEDSPMLYVPEVYPDYCSESMMVMERIYGIPVSDVEALEAQGTNMQLLAERGVQVFFTQVFRDSFFHADMHPGNIFVSYEHPEDPQYIGIDCGIVGSLNKEDKRYLAENFIAFFNRDYRKVAELHVDSGWVPPDTNVEEFEFAIRTVCEPIFEKPLAEISFGHVLLNLFNTARRFNMEVQPQLVLLQKTLLYVEGVGRQLYPQLDLWKTAKPFLESWIKDQVGIPALVRAFKDKAPFWIERMPEIPELVYQSLQQSKQLQTSVDTIVRDMHVRHVRQGQSRYLFGIGAVLLLSGTLLFIHRPEWGMMPGWLMAGGVVTWLIGWRKTH.

The Protein kinase domain occupies 124–502 (DFSVEPLASA…HVRQGQSRYL (379 aa)). ATP is bound by residues 130–138 (LASASIAQV) and Lys153. Asp288 functions as the Proton acceptor in the catalytic mechanism. Transmembrane regions (helical) follow at residues 501 to 521 (YLFGIGAVLLLSGTLLFIHRP) and 522 to 542 (EWGMMPGWLMAGGVVTWLIGW).

This sequence belongs to the ABC1 family. UbiB subfamily.

It localises to the cell inner membrane. It participates in cofactor biosynthesis; ubiquinone biosynthesis [regulation]. In terms of biological role, is probably a protein kinase regulator of UbiI activity which is involved in aerobic coenzyme Q (ubiquinone) biosynthesis. This chain is Probable protein kinase UbiB, found in Klebsiella pneumoniae (strain 342).